Here is a 554-residue protein sequence, read N- to C-terminus: Glucose-6-phosphate isomerase (554 aa).

Glu359 (proton donor) is an active-site residue. Catalysis depends on residues His390 and Lys518.

This sequence belongs to the GPI family.

The protein resides in the cytoplasm. The catalysed reaction is alpha-D-glucose 6-phosphate = beta-D-fructose 6-phosphate. It participates in carbohydrate biosynthesis; gluconeogenesis. It functions in the pathway carbohydrate degradation; glycolysis; D-glyceraldehyde 3-phosphate and glycerone phosphate from D-glucose: step 2/4. Catalyzes the reversible isomerization of glucose-6-phosphate to fructose-6-phosphate. This is Glucose-6-phosphate isomerase from Pseudomonas savastanoi pv. phaseolicola (strain 1448A / Race 6) (Pseudomonas syringae pv. phaseolicola (strain 1448A / Race 6)).